The primary structure comprises 181 residues: MCKGLAALPHSCLERAKEIKIKLGILLQKPESAVDLVIPYNEKPDKPVKIQKPSLDEALQWRDSLDKLLQNNYGLASFKSFLKSEFSEENLEFWMACEDYKKIKSPVKMAEKAKKIYEEFIQSEAPKEVNIDHFTKEITMKNLVEPSPSSFDVAQKRIYALMEKDSLPRFVRSEFYQEFIK.

The RGS domain occupies 64-180 (SLDKLLQNNY…VRSEFYQEFI (117 aa)).

It is found in the cytoplasm. The protein localises to the membrane. Functionally, inhibits signal transduction by increasing the GTPase activity of G protein alpha subunits thereby driving them into their inactive GDP-bound form. Binds to G(i)-alpha and G(o)-alpha, but not to G(s)-alpha. The sequence is that of Regulator of G-protein signaling 5 (RGS5) from Sus scrofa (Pig).